A 142-amino-acid polypeptide reads, in one-letter code: Transcriptional regulator MraZ (142 aa).

2 SpoVT-AbrB domains span residues 5–51 (ASSL…PRNE) and 77–120 (AMDV…DAAT).

It belongs to the MraZ family. As to quaternary structure, forms oligomers.

The protein localises to the cytoplasm. Its subcellular location is the nucleoid. This is Transcriptional regulator MraZ from Polaromonas sp. (strain JS666 / ATCC BAA-500).